Reading from the N-terminus, the 428-residue chain is Trigger factor (428 aa).

Residues 163 to 248 form the PPIase FKBP-type domain; the sequence is GDTVVIDFEG…LHEIKTKQLP (86 aa).

The protein belongs to the FKBP-type PPIase family. Tig subfamily.

Its subcellular location is the cytoplasm. The enzyme catalyses [protein]-peptidylproline (omega=180) = [protein]-peptidylproline (omega=0). Involved in protein export. Acts as a chaperone by maintaining the newly synthesized protein in an open conformation. Functions as a peptidyl-prolyl cis-trans isomerase. The sequence is that of Trigger factor from Anoxybacillus flavithermus (strain DSM 21510 / WK1).